A 197-amino-acid polypeptide reads, in one-letter code: 7-methyl-GTP pyrophosphatase (197 aa).

Asp-69 serves as the catalytic Proton acceptor.

This sequence belongs to the Maf family. YceF subfamily. A divalent metal cation is required as a cofactor.

It localises to the cytoplasm. The catalysed reaction is N(7)-methyl-GTP + H2O = N(7)-methyl-GMP + diphosphate + H(+). Its function is as follows. Nucleoside triphosphate pyrophosphatase that hydrolyzes 7-methyl-GTP (m(7)GTP). May have a dual role in cell division arrest and in preventing the incorporation of modified nucleotides into cellular nucleic acids. The polypeptide is 7-methyl-GTP pyrophosphatase (Syntrophotalea carbinolica (strain DSM 2380 / NBRC 103641 / GraBd1) (Pelobacter carbinolicus)).